A 558-amino-acid chain; its full sequence is Protein SET DOMAIN GROUP 41 (558 aa).

The 135-residue stretch at 115-249 (PSISVAIHHA…SGEEITVSYI (135 aa)) folds into the SET domain.

This sequence belongs to the class V-like SAM-binding methyltransferase superfamily.

The sequence is that of Protein SET DOMAIN GROUP 41 (SDG41) from Arabidopsis thaliana (Mouse-ear cress).